The following is a 119-amino-acid chain: Large ribosomal subunit protein uL22 (119 aa).

This sequence belongs to the universal ribosomal protein uL22 family. Part of the 50S ribosomal subunit.

This protein binds specifically to 23S rRNA; its binding is stimulated by other ribosomal proteins, e.g. L4, L17, and L20. It is important during the early stages of 50S assembly. It makes multiple contacts with different domains of the 23S rRNA in the assembled 50S subunit and ribosome. Functionally, the globular domain of the protein is located near the polypeptide exit tunnel on the outside of the subunit, while an extended beta-hairpin is found that lines the wall of the exit tunnel in the center of the 70S ribosome. The polypeptide is Large ribosomal subunit protein uL22 (Pelodictyon phaeoclathratiforme (strain DSM 5477 / BU-1)).